The sequence spans 271 residues: 3-methyl-2-oxobutanoate hydroxymethyltransferase 1 (271 aa).

Mg(2+) contacts are provided by Asp-53 and Asp-92. Residues 53 to 54 (DS), Asp-92, and Lys-120 each bind 3-methyl-2-oxobutanoate. Glu-122 serves as a coordination point for Mg(2+). Glu-189 acts as the Proton acceptor in catalysis.

Belongs to the PanB family. In terms of assembly, homodecamer; pentamer of dimers. Mg(2+) is required as a cofactor.

The protein localises to the cytoplasm. It catalyses the reaction 3-methyl-2-oxobutanoate + (6R)-5,10-methylene-5,6,7,8-tetrahydrofolate + H2O = 2-dehydropantoate + (6S)-5,6,7,8-tetrahydrofolate. Its pathway is cofactor biosynthesis; (R)-pantothenate biosynthesis; (R)-pantoate from 3-methyl-2-oxobutanoate: step 1/2. Its function is as follows. Catalyzes the reversible reaction in which hydroxymethyl group from 5,10-methylenetetrahydrofolate is transferred onto alpha-ketoisovalerate to form ketopantoate. The protein is 3-methyl-2-oxobutanoate hydroxymethyltransferase 1 of Burkholderia ambifaria (strain ATCC BAA-244 / DSM 16087 / CCUG 44356 / LMG 19182 / AMMD) (Burkholderia cepacia (strain AMMD)).